The sequence spans 791 residues: Leucine-rich repeat-containing protein SOG2 (791 aa).

The disordered stretch occupies residues 1 to 28; the sequence is MVATSSKRTLDPKEEHLPADKTSTNSSN. Basic and acidic residues predominate over residues 8–19; that stretch reads RTLDPKEEHLPA. 6 LRR repeats span residues 43–64, 67–88, 90–111, 113–134, 138–159, and 163–183; these read SGTTLKLIALNIKSISDEDVGY, NVERLSLRKNHLTSLPASFKRL, RLQYLDLHNNNFKEIPYILTQC, QLEILDLSSNEIEALPDEISSF, NIRVLSLKDNNVTSIRNLKSIT, and KLSILDLEDNKIPKEELDQVQ. A Phosphothreonine modification is found at T214. Disordered stretches follow at residues 454–506 and 534–569; these read ASKA…TPSA and HTHGPILGHQNAISNGSSQTNMNEVKTTSDTIPRQQ. Over residues 469-486 the composition is skewed to low complexity; that stretch reads SSSSITSGGGPAASTTST. A compositionally biased stretch (polar residues) spans 544 to 569; it reads NAISNGSSQTNMNEVKTTSDTIPRQQ.

It is found in the cytoplasm. Required for proper cell morphogenesis and cell separation after mitosis. Functions in the RAM (regulation of ACE2 activity and cellular morphogenesis) signaling network and is required for proper ACE2 localization and CBK1 kinase activity. In Saccharomyces cerevisiae (strain ATCC 204508 / S288c) (Baker's yeast), this protein is Leucine-rich repeat-containing protein SOG2.